The sequence spans 321 residues: Digestive cysteine proteinase 3 (321 aa).

Positions 1 to 16 are cleaved as a signal peptide; the sequence is MKVAALFLCGLALATA. A propeptide spans 17–106 (activation peptide); that stretch reads SPSWDHFKTQ…AVFTAEAGPM (90 aa). 3 disulfide bridges follow: C127–C170, C161–C203, and C261–C310. C130 is an active-site residue. Catalysis depends on residues H268 and N288.

The protein belongs to the peptidase C1 family.

Inhibited by E-64, antipain, leupeptin, heavy metal ions, iodoacetic acid, dithionitrobenzene, p-hydroxymercuri-benzoate; activated by mercaptoethanol and dithiothreitol. The chain is Digestive cysteine proteinase 3 (LCP3) from Homarus americanus (American lobster).